The sequence spans 205 residues: Proteasome subunit beta type-3 (205 aa).

Belongs to the peptidase T1B family. As to quaternary structure, the 26S proteasome consists of a 20S proteasome core and two 19S regulatory subunits. The 20S proteasome core is composed of 28 subunits that are arranged in four stacked rings, resulting in a barrel-shaped structure. The two end rings are each formed by seven alpha subunits, and the two central rings are each formed by seven beta subunits. The catalytic chamber with the active sites is on the inside of the barrel.

It is found in the cytoplasm. The protein localises to the nucleus. Its function is as follows. Non-catalytic component of the proteasome, a multicatalytic proteinase complex which is characterized by its ability to cleave peptides with Arg, Phe, Tyr, Leu, and Glu adjacent to the leaving group at neutral or slightly basic pH. The proteasome has an ATP-dependent proteolytic activity. The chain is Proteasome subunit beta type-3 from Drosophila melanogaster (Fruit fly).